The following is a 543-amino-acid chain: Chaperonin GroEL 1 (543 aa).

ATP-binding positions include 30–33 (TLGP), lysine 51, 87–91 (DGTTT), glycine 415, and aspartate 496.

It belongs to the chaperonin (HSP60) family. Forms a cylinder of 14 subunits composed of two heptameric rings stacked back-to-back. Interacts with the co-chaperonin GroES.

It is found in the cytoplasm. The catalysed reaction is ATP + H2O + a folded polypeptide = ADP + phosphate + an unfolded polypeptide.. Functionally, together with its co-chaperonin GroES, plays an essential role in assisting protein folding. The GroEL-GroES system forms a nano-cage that allows encapsulation of the non-native substrate proteins and provides a physical environment optimized to promote and accelerate protein folding. The chain is Chaperonin GroEL 1 from Mesorhizobium japonicum (strain LMG 29417 / CECT 9101 / MAFF 303099) (Mesorhizobium loti (strain MAFF 303099)).